Reading from the N-terminus, the 901-residue chain is Alpha-actinin-3 (901 aa).

Methionine 1 carries the N-acetylmethionine modification. Residues 1–261 (MMMVMQPEGL…IMTYVSCFYH (261 aa)) are actin-binding. Calponin-homology (CH) domains lie at 45–149 (KQQR…LRFA) and 158–264 (TSAK…HAFA). Spectrin repeat units follow at residues 288–398 (KLME…WLLS), 408–513 (HLAE…ALER), 523–634 (RLQL…TLQE), and 644–747 (RLRR…EVEN). EF-hand domains lie at 760–795 (EQLN…MGYD) and 796–831 (LGEV…ETAE). 6 residues coordinate Ca(2+): aspartate 773, asparagine 777, methionine 779, aspartate 784, aspartate 809, and asparagine 811.

The protein belongs to the alpha-actinin family. In terms of assembly, homodimer; antiparallel. Also forms heterodimers with ACTN2. Interacts with MYOZ1. Expression restricted to fast (type 2) skeletal muscle fibers (at protein level).

Its function is as follows. F-actin cross-linking protein which is thought to anchor actin to a variety of intracellular structures. This is a bundling protein. The chain is Alpha-actinin-3 (ACTN3) from Homo sapiens (Human).